A 732-amino-acid polypeptide reads, in one-letter code: MKIFSESHKTVFVVDHCPYMAESCRQHVEFDMLVKNRTQGIIPLAPISKSLWTCSVESSMEYCRIMYDIFPFKKLVNFIVSDSGAHVLNSWTQEDQNLQELMAALATVGPPNPRADPECCSILHGLVAAVETLCKITEYQHEARTLLMENAERVGNRGRIICITNAKSDSHVRMLEDCVQETIHEHNKLAANSDHLMQIQKCELVLIHTYPVGEDSLVSDRPKKELSPVLTSEVHSVRAGRHLATKLNVLVQQHFDLASTTITNIPMKEEQHANTSANYDVELLHHKDAHVDFLRSGDSHSGSSSREGPFKETVTLKWCTPRTNSIELHYCTGAYRISPVDVNSRPSSCLTNFLLNGRSVLLEQPRKSGSKVISHMLSSHGGEIFLHVLSSSRSILEDPPSISEGCGGRVTDYRITDFGEFMRENRLTPFLDPRYKIDASLEIPLERAKDQLEKHTRYWPMIISQTTIFNMQAVVPLAGVIVKESLTEEDVLNCQKTIYNLVDMERKNDPLPVSTVGTRGKGPKRDEQYRIMWNELETLVRAHISNSEKHQRVLECLMACRSKPPEEEERKKRGRKREDREDKSEQAGKEHGTEKARPDADRLKGILERGKEELAEAEVIKDSPDSPEPPNKKPLVETDETPHMEKSKGPVSLLSLWSNRINTANSRKHQEFAGRLNSVNNRAELYQHLKEENGEEVGLTGGPRTAIPFLKCPRSPVVNRMETTENGKASRQ.

Positions 564-648 are enriched in basic and acidic residues; that stretch reads PPEEEERKKR…DETPHMEKSK (85 aa). The segment at 564–650 is disordered; sequence PPEEEERKKR…TPHMEKSKGP (87 aa). A Nuclear localization signal (NLS) motif is present at residues 572 to 582; it reads KRGRKREDRED. Lysine 611 is covalently cross-linked (Glycyl lysine isopeptide (Lys-Gly) (interchain with G-Cter in SUMO2)). Serine 623, serine 626, and serine 678 each carry phosphoserine. The interval 649–694 is cleavage module binding motif (CMBM); the sequence is GPVSLLSLWSNRINTANSRKHQEFAGRLNSVNNRAELYQHLKEENG.

This sequence belongs to the Integrator subunit 13 family. In terms of assembly, component of the Integrator complex, composed of core subunits INTS1, INTS2, INTS3, INTS4, INTS5, INTS6, INTS7, INTS8, INTS9/RC74, INTS10, INTS11/CPSF3L, INTS12, INTS13, INTS14 and INTS15. The core complex associates with protein phosphatase 2A subunits PPP2CA and PPP2R1A, to form the Integrator-PP2A (INTAC) complex. INTS13 is part of the tail subcomplex, composed of INTS10, INTS13, INTS14 and INTS15. Interacts with transcription factors ZNF609 and ZNF655. Interacts with PAFAH1B1; this interaction may be required for proper recruitment of dynein complexes to the nuclear envelope at prophase.

Its subcellular location is the nucleus. The protein localises to the cytoplasm. Component of the integrator complex, a multiprotein complex that terminates RNA polymerase II (Pol II) transcription in the promoter-proximal region of genes. The integrator complex provides a quality checkpoint during transcription elongation by driving premature transcription termination of transcripts that are unfavorably configured for transcriptional elongation: the complex terminates transcription by (1) catalyzing dephosphorylation of the C-terminal domain (CTD) of Pol II subunit POLR2A/RPB1 and SUPT5H/SPT5, (2) degrading the exiting nascent RNA transcript via endonuclease activity and (3) promoting the release of Pol II from bound DNA. The integrator complex is also involved in terminating the synthesis of non-coding Pol II transcripts, such as enhancer RNAs (eRNAs), small nuclear RNAs (snRNAs), telomerase RNAs and long non-coding RNAs (lncRNAs). Within the integrator complex, INTS13 is part of the integrator tail module and acts as a platform for the recruitment of transcription factors at promoters. At prophase, mediates recruitment of cytoplasmic dynein to the nuclear envelope, a step important for proper centrosome-nucleus coupling. At G2/M phase, may be required for proper spindle formation and execution of cytokinesis. This Mus musculus (Mouse) protein is Integrator complex subunit 13.